The chain runs to 132 residues: Fatty acid-binding protein type 3 (132 aa).

This sequence belongs to the calycin superfamily. Fatty-acid binding protein (FABP) family.

In Fasciola hepatica (Liver fluke), this protein is Fatty acid-binding protein type 3.